We begin with the raw amino-acid sequence, 445 residues long: tRNA modification GTPase MnmE (445 aa).

Arg-20, Glu-79, and Lys-119 together coordinate (6S)-5-formyl-5,6,7,8-tetrahydrofolate. The region spanning Gly-215–Glu-371 is the TrmE-type G domain. A K(+)-binding site is contributed by Asn-225. Residues Asn-225–Ser-230, Ser-244–Thr-250, and Asp-269–Gly-272 contribute to the GTP site. Residue Ser-229 coordinates Mg(2+). Residues Ser-244, Ile-246, and Thr-249 each contribute to the K(+) site. Thr-250 contacts Mg(2+). (6S)-5-formyl-5,6,7,8-tetrahydrofolate is bound at residue Lys-445.

The protein belongs to the TRAFAC class TrmE-Era-EngA-EngB-Septin-like GTPase superfamily. TrmE GTPase family. In terms of assembly, homodimer. Heterotetramer of two MnmE and two MnmG subunits. K(+) is required as a cofactor.

It is found in the cytoplasm. Its function is as follows. Exhibits a very high intrinsic GTPase hydrolysis rate. Involved in the addition of a carboxymethylaminomethyl (cmnm) group at the wobble position (U34) of certain tRNAs, forming tRNA-cmnm(5)s(2)U34. This Rickettsia akari (strain Hartford) protein is tRNA modification GTPase MnmE.